The sequence spans 81 residues: Teretoxin Tsu6.8 (81 aa).

Positions Met1 to Leu21 are cleaved as a signal peptide. Residues Gly22–Arg45 constitute a propeptide that is removed on maturation.

The protein belongs to the teretoxin M (TM) superfamily. Contains 3 disulfide bonds. In terms of tissue distribution, expressed by the venom duct.

The protein localises to the secreted. The protein is Teretoxin Tsu6.8 of Terebra subulata (Chocolate spotted auger).